Here is a 333-residue protein sequence, read N- to C-terminus: Mitochondrial 2-oxoglutarate/malate carrier protein (333 aa).

3 Solcar repeats span residues Phe-29–Arg-127, Pro-136–Phe-227, and Asp-236–Ala-325. A run of 6 helical transmembrane segments spans residues Arg-30–Leu-61, Gly-102–Ile-120, Phe-138–Ala-159, Gly-202–Tyr-221, His-241–Val-259, and Gly-300–Leu-319.

This sequence belongs to the mitochondrial carrier (TC 2.A.29) family. In terms of assembly, interacts with SMIM26.

It localises to the membrane. It catalyses the reaction (S)-malate(in) + 2-oxoglutarate(out) = (S)-malate(out) + 2-oxoglutarate(in). The enzyme catalyses malonate(in) + 2-oxoglutarate(out) = malonate(out) + 2-oxoglutarate(in). The catalysed reaction is succinate(in) + 2-oxoglutarate(out) = succinate(out) + 2-oxoglutarate(in). It carries out the reaction maleate(in) + 2-oxoglutarate(out) = maleate(out) + 2-oxoglutarate(in). It catalyses the reaction oxaloacetate(in) + 2-oxoglutarate(out) = oxaloacetate(out) + 2-oxoglutarate(in). Functionally, catalyzes the transport of 2-oxoglutarate (alpha-oxoglutarate) across the inner mitochondrial membrane in an electroneutral exchange for malate. Can also exchange 2-oxoglutarate for other dicarboxylic acids such as malonate, succinate, maleate and oxaloacetate, although with lower affinity. Contributes to several metabolic processes, including the malate-aspartate shuttle, the oxoglutarate/isocitrate shuttle, in gluconeogenesis from lactate, and in nitrogen metabolism. Maintains mitochondrial fusion and fission events, and the organization and morphology of cristae. Involved in the regulation of apoptosis. Helps protect from cytotoxic-induced apoptosis by modulating glutathione levels in mitochondria. This Sus scrofa (Pig) protein is Mitochondrial 2-oxoglutarate/malate carrier protein (SLC25A11).